Here is a 486-residue protein sequence, read N- to C-terminus: UDP-N-acetylmuramate--L-alanine ligase (486 aa).

126–132 (GTHGKTS) provides a ligand contact to ATP.

Belongs to the MurCDEF family.

The protein resides in the cytoplasm. It catalyses the reaction UDP-N-acetyl-alpha-D-muramate + L-alanine + ATP = UDP-N-acetyl-alpha-D-muramoyl-L-alanine + ADP + phosphate + H(+). It participates in cell wall biogenesis; peptidoglycan biosynthesis. Functionally, cell wall formation. This chain is UDP-N-acetylmuramate--L-alanine ligase, found in Corynebacterium glutamicum (strain R).